We begin with the raw amino-acid sequence, 276 residues long: MQKQIVEEMKVKVSIDPLSEIQRRVDFIKSTLTQSGCKSLILGISGGVDSTTCGRLAQIAVNELNKESNSSDYQFIAVRLPYGIQKDEDEAQLALEFIKPTHSISINIKDGVDGLHKANHLGLAHTGLLPTANDKIDFVKGNVKARARMIAQYEVAGYVGGLVLGTDHSAENITGFYTKFGDGACDLAPLFGLNKRQVRDVAAELGAPEQLVKKVPTADLEELAPQKADEDALSVTYDEIDDFLEGKKIDTEAEARLIKIYQTSQHKRKPIPTIYD.

43–50 (GISGGVDS) lines the ATP pocket. Aspartate 49 is a Mg(2+) binding site. Residue arginine 146 participates in deamido-NAD(+) binding. Threonine 166 contacts ATP. Glutamate 171 is a binding site for Mg(2+). Deamido-NAD(+) is bound by residues lysine 179 and aspartate 186. Residues lysine 195 and threonine 217 each coordinate ATP. 266-267 (HK) contributes to the deamido-NAD(+) binding site.

It belongs to the NAD synthetase family. As to quaternary structure, homodimer.

It carries out the reaction deamido-NAD(+) + NH4(+) + ATP = AMP + diphosphate + NAD(+) + H(+). The protein operates within cofactor biosynthesis; NAD(+) biosynthesis; NAD(+) from deamido-NAD(+) (ammonia route): step 1/1. Catalyzes the ATP-dependent amidation of deamido-NAD to form NAD. Uses ammonia as a nitrogen source. The chain is NH(3)-dependent NAD(+) synthetase from Aliivibrio salmonicida (strain LFI1238) (Vibrio salmonicida (strain LFI1238)).